Here is a 94-residue protein sequence, read N- to C-terminus: Selenoprotein K (94 aa).

The helical transmembrane segment at 20–42 (LSLITDFFWGIAEFVVLFFKTLL) threads the bilayer. The segment at 47-94 (KKGRGYRNSSDSRYDDGRGPPGNPPRRMGRISHLHGPSPPPMAGGUGR) is disordered. A non-standard amino acid (selenocysteine) is located at residue selenocysteine 92.

Belongs to the selenoprotein K family. In terms of assembly, interacts with DERL1, DERL2, DERL3 and SELENOS. The SELENOK-SELENOS complex interacts with VCP. Interacts with ZDHHC6. In terms of processing, cleaved by CAPN2/m-calpain in resting macrophages but not in activated macrophages. Macrophage activation up-regulates expression of the calpain inhibitor CAST/calpastatin, resulting in inhibition of CAPN2 activity. Post-translationally, truncated SELENOK proteins produced by failed UGA/Sec decoding are ubiquitinated by the CRL2(KLHDC2) complex, which recognizes the diglycine (Gly-Gly) at the C-terminus of truncated SELENOK proteins.

The protein localises to the endoplasmic reticulum membrane. It localises to the cell membrane. Required for Ca(2+) flux in immune cells and plays a role in T-cell proliferation and in T-cell and neutrophil migration. Involved in endoplasmic reticulum-associated degradation (ERAD) of soluble glycosylated proteins. Required for palmitoylation and cell surface expression of CD36 and involved in macrophage uptake of low-density lipoprotein and in foam cell formation. Together with ZDHHC6, required for palmitoylation of ITPR1 in immune cells, leading to regulate ITPR1 stability and function. Plays a role in protection of cells from ER stress-induced apoptosis. Protects cells from oxidative stress when overexpressed in cardiomyocytes. This is Selenoprotein K from Chinchilla lanigera (Long-tailed chinchilla).